The sequence spans 265 residues: Speedy protein E12 (265 aa).

The tract at residues Met-1–Pro-80 is disordered. The span at Gln-13 to Gln-23 shows a compositional bias: low complexity. Positions Asp-66–Pro-80 are enriched in acidic residues.

It belongs to the Speedy/Ringo family.

The polypeptide is Speedy protein E12 (Homo sapiens (Human)).